A 205-amino-acid chain; its full sequence is Small ribosomal subunit protein uS4 (205 aa).

Positions 18-49 (NIWGRPKSPVNKREYGPGQHGQRRKGKLSDFG) are disordered. The S4 RNA-binding domain occupies 94-157 (RRLDAIVYRA…KQLALVLEAN (64 aa)).

It belongs to the universal ribosomal protein uS4 family. In terms of assembly, part of the 30S ribosomal subunit. Contacts protein S5. The interaction surface between S4 and S5 is involved in control of translational fidelity.

In terms of biological role, one of the primary rRNA binding proteins, it binds directly to 16S rRNA where it nucleates assembly of the body of the 30S subunit. Its function is as follows. With S5 and S12 plays an important role in translational accuracy. This is Small ribosomal subunit protein uS4 from Afipia carboxidovorans (strain ATCC 49405 / DSM 1227 / KCTC 32145 / OM5) (Oligotropha carboxidovorans).